The chain runs to 61 residues: Small ribosomal subunit protein uS14 (61 aa).

4 residues coordinate Zn(2+): Cys24, Cys27, Cys40, and Cys43.

Belongs to the universal ribosomal protein uS14 family. Zinc-binding uS14 subfamily. Part of the 30S ribosomal subunit. Contacts proteins S3 and S10. Zn(2+) is required as a cofactor.

In terms of biological role, binds 16S rRNA, required for the assembly of 30S particles and may also be responsible for determining the conformation of the 16S rRNA at the A site. The protein is Small ribosomal subunit protein uS14 of Geobacter sp. (strain M21).